The following is a 607-amino-acid chain: UvrABC system protein C (607 aa).

The 79-residue stretch at 16–94 (GRPGVYRMFD…IKEWRPPYNI (79 aa)) folds into the GIY-YIG domain. Residues 203–238 (QQLGNELNAEMEKAAMALDFEKAAELRDQIALLRRV) enclose the UVR domain.

Belongs to the UvrC family. As to quaternary structure, interacts with UvrB in an incision complex.

The protein resides in the cytoplasm. The UvrABC repair system catalyzes the recognition and processing of DNA lesions. UvrC both incises the 5' and 3' sides of the lesion. The N-terminal half is responsible for the 3' incision and the C-terminal half is responsible for the 5' incision. The polypeptide is UvrABC system protein C (Pseudomonas putida (strain ATCC 47054 / DSM 6125 / CFBP 8728 / NCIMB 11950 / KT2440)).